Reading from the N-terminus, the 336-residue chain is GTP 3',8-cyclase (336 aa).

The region spanning 16–241 (AYRRTYYYLR…QSKGITDGPA (226 aa)) is the Radical SAM core domain. Arginine 25 is a GTP binding site. Residues cysteine 32 and cysteine 36 each coordinate [4Fe-4S] cluster. S-adenosyl-L-methionine is bound at residue tyrosine 38. Cysteine 39 provides a ligand contact to [4Fe-4S] cluster. Arginine 75 lines the GTP pocket. An S-adenosyl-L-methionine-binding site is contributed by glycine 79. Position 106 (threonine 106) interacts with GTP. Serine 130 contacts S-adenosyl-L-methionine. Lysine 167 contacts GTP. S-adenosyl-L-methionine is bound at residue methionine 201. Residues cysteine 264 and cysteine 267 each contribute to the [4Fe-4S] cluster site. GTP is bound at residue 269–271 (RLR). Cysteine 281 provides a ligand contact to [4Fe-4S] cluster.

This sequence belongs to the radical SAM superfamily. MoaA family. In terms of assembly, monomer and homodimer. It depends on [4Fe-4S] cluster as a cofactor.

It carries out the reaction GTP + AH2 + S-adenosyl-L-methionine = (8S)-3',8-cyclo-7,8-dihydroguanosine 5'-triphosphate + 5'-deoxyadenosine + L-methionine + A + H(+). Its pathway is cofactor biosynthesis; molybdopterin biosynthesis. Functionally, catalyzes the cyclization of GTP to (8S)-3',8-cyclo-7,8-dihydroguanosine 5'-triphosphate. The sequence is that of GTP 3',8-cyclase from Actinobacillus succinogenes (strain ATCC 55618 / DSM 22257 / CCUG 43843 / 130Z).